Reading from the N-terminus, the 90-residue chain is Molybdopterin synthase sulfur carrier subunit (90 aa).

A 1-thioglycine; alternate modification is found at G90. G90 carries the glycyl adenylate; alternate modification.

Belongs to the MoaD family. MOCS2A subfamily. In terms of assembly, heterotetramer; composed of 2 small (Mocs2A) and 2 large (Mocs2B) subunits. In terms of processing, C-terminal thiocarboxylation occurs in 2 steps, it is first acyl-adenylated (-COAMP) via the hesA/moeB/thiF part of MOCS3, then thiocarboxylated (-COSH) via the rhodanese domain of MOCS3.

The protein localises to the cytoplasm. The protein operates within cofactor biosynthesis; molybdopterin biosynthesis. Acts as a sulfur carrier required for molybdopterin biosynthesis. Component of the molybdopterin synthase complex that catalyzes the conversion of precursor Z into molybdopterin by mediating the incorporation of 2 sulfur atoms into precursor Z to generate a dithiolene group. In the complex, serves as sulfur donor by being thiocarboxylated (-COSH) at its C-terminus by MOCS3. After interaction with Mocs2B, the sulfur is then transferred to precursor Z to form molybdopterin. This Drosophila ananassae (Fruit fly) protein is Molybdopterin synthase sulfur carrier subunit.